The following is a 366-amino-acid chain: MSKFKSLLLLFGTLILLSGCSNIEIFNAKGPVASSQKFLILYSIVFMLVICFVVLGMFAIFIYKYSYNKNAESGKMHHNAIIETIWFVIPIIIVAALAIPTVKTLYDYEKPPKSEKDPMVVYAVSAGYKWFFAYPDEHIETVNTLTIPKDRPVVFKLQAMDTMTSFWIPQLGGQKYAMTGMTMNWTLEASQTGTFRGRNSNFNGEGFSRQTFKVNAVSQKDYDKWVKEVKGKKTLDQDTFDKQLLPSTPNKALEFNGTHMAFVDPAADPEYIFYAYKRFNFELKDPNFTSEENMFKDVSEKPLIPARKAQITNANYKRHGMKLMILGNDEPYNNEFKKDESKNAKEMKKISKDAQDQDNDDHGGGH.

Positions 1-19 (MSKFKSLLLLFGTLILLSG) are cleaved as a signal peptide. C20 carries the N-palmitoyl cysteine lipid modification. C20 carries S-diacylglycerol cysteine lipidation. A run of 2 helical transmembrane segments spans residues 38–58 (FLILYSIVFMLVICFVVLGMF) and 80–100 (AIIETIWFVIPIIIVAALAIP). The disordered stretch occupies residues 330–366 (EPYNNEFKKDESKNAKEMKKISKDAQDQDNDDHGGGH). Residues 335-366 (EFKKDESKNAKEMKKISKDAQDQDNDDHGGGH) are compositionally biased toward basic and acidic residues.

This sequence belongs to the cytochrome c oxidase subunit 2 family.

It is found in the cell membrane. The catalysed reaction is 2 a quinol + O2 = 2 a quinone + 2 H2O. Its function is as follows. Catalyzes quinol oxidation with the concomitant reduction of oxygen to water. Subunit II transfers the electrons from a quinol to the binuclear center of the catalytic subunit I. The sequence is that of Probable quinol oxidase subunit 2 (qoxA) from Staphylococcus aureus (strain bovine RF122 / ET3-1).